Consider the following 598-residue polypeptide: MENSSAASASSEAGSSRSQEIEELERFIDSYVLEYQVQGLLADKTEGDGESERTQSHISQWTADCSEPLDSSCSFSRGRAPPQQNGSKDNSLDMLGTDIWAANTFDSFSGATWDLQPEKLDFTQFHRKVRHTPKQPLPHIDREGCGKGKLEDGDGINLNDIEKVLPAWQGYHPMPHEVEIAHTKKLFRRRRNDRRRQQRPPGGNKPQQHGDHQPGSAKHNRDHQKSYQGGSAPHPSGRPTHHGYSQNRRWHHGNMKHPPGDKGEAGAHRNAKETMTIENPKLEDTAGDTGHSSLEAPRSPDTLAPVASERLPPQQSGGPEVETKRKDSILPERIGERPKITLLQSSKDRLRRRLKEKDEVAVETTTPQQNKMDKLIEILNSMRNNSSDVDTKLTTFMEEAQNSTNSEEMLGEIVRTIYQKAVSDRSFAFTAAKLCDKMALFMVEGTKFRSLLLNMLQKDFTVREELQQQDVERWLGFITFLCEVFGTMRSSTGEPFRVLVCPIYTCLRELLQSQDVKEDAVLCCSMELQSTGRLLEEQLPEMMTELLASARDKMLCPSESMLTRSLLLEVIELHANSWNPLTPPITQYYNRTIQKLTA.

N-acetylmethionine is present on M1. The span at 1-18 (MENSSAASASSEAGSSRS) shows a compositional bias: low complexity. Disordered regions lie at residues 1–20 (MENS…RSQE), 43–90 (DKTE…SKDN), and 180–336 (IAHT…RIGE). Residues 1 to 305 (MENSSAASAS…APRSPDTLAP (305 aa)) form an interaction with NCBP1/CBP80 region. S18 bears the Phosphoserine mark. The segment covering 43–55 (DKTEGDGESERTQ) has biased composition (basic and acidic residues). Residues 56–75 (SHISQWTADCSEPLDSSCSF) are compositionally biased toward polar residues. Over residues 183–198 (TKKLFRRRRNDRRRQQ) the composition is skewed to basic residues. The segment covering 258 to 272 (PPGDKGEAGAHRNAK) has biased composition (basic and acidic residues). A Phosphothreonine modification is found at T289. S299 is subject to Phosphoserine. Residues 321–336 (VETKRKDSILPERIGE) are compositionally biased toward basic and acidic residues. Positions 376 to 577 (IEILNSMRNN…LEVIELHANS (202 aa)) constitute an MIF4G domain.

This sequence belongs to the CTIF family. In terms of assembly, interacts with NCBP1/CBP80; the interaction is direct. Associates with the eukaryotic translation initiation factor 3 (eIF-3) complex. As to expression, widely expressed.

Its subcellular location is the cytoplasm. It localises to the perinuclear region. In terms of biological role, specifically required for the pioneer round of mRNA translation mediated by the cap-binding complex (CBC), that takes place during or right after mRNA export via the nuclear pore complex (NPC). Acts via its interaction with the NCBP1/CBP80 component of the CBC complex and recruits the 40S small subunit of the ribosome via eIF3. In contrast, it is not involved in steady state translation, that takes place when the CBC complex is replaced by cytoplasmic cap-binding protein eIF4E. Also required for nonsense-mediated mRNA decay (NMD), the pioneer round of mRNA translation mediated by the cap-binding complex playing a central role in nonsense-mediated mRNA decay (NMD). The protein is CBP80/20-dependent translation initiation factor (CTIF) of Homo sapiens (Human).